Reading from the N-terminus, the 393-residue chain is Sialyltransferase-like protein 1 (393 aa).

Residues 1–8 (MKRPLRRP) are Cytoplasmic-facing. Residues 9–27 (FAVLLFVVLCAAASFPSVL) traverse the membrane as a helical; Signal-anchor for type II membrane protein segment. Residues 28–393 (RRSVGPAPVL…IAVPPVVFYH (366 aa)) are Lumenal-facing. 3 N-linked (GlcNAc...) asparagine glycosylation sites follow: N49, N212, and N258.

This sequence belongs to the glycosyltransferase 29 family. Expressed in leaves and stalks. Expressed at low levels in roots.

It is found in the golgi apparatus membrane. In terms of biological role, possesses sialyltransferase-like activity in vitro. Transfers sialic acid to the oligosaccharide Gal-beta-1,3-GalNAc and to glycoproteins such as asialofetuin, alpha-1-acid glycoprotein (NeuAc-alpha-2,3-Gal-beta-1,3-GalNAc-) and andasialo-alpha-1-acid glycoprotein. The transferred sialic acid is linked to galactose of Gal-beta-1,3-GalNAc through alpha-2,6-linkage. This Oryza sativa subsp. japonica (Rice) protein is Sialyltransferase-like protein 1.